The primary structure comprises 1558 residues: Arginine-glutamic acid dipeptide repeats protein (1558 aa).

Residues 1–36 (MTADKDKDKDKEKDRDRDRDRERDKRDKARESENAR) are compositionally biased toward basic and acidic residues. A disordered region spans residues 1-90 (MTADKDKDKD…KKKSRYERTD (90 aa)). Phosphoserine is present on residues S53 and S56. Positions 74–85 (KSRKKPPKKKSR) are enriched in basic residues. Positions 103-283 (VVYRPGDCVY…PETRRLNSTQ (181 aa)) constitute a BAH domain. The residue at position 120 (T120) is a Phosphothreonine. Phosphoserine is present on residues S142 and S304. An ELM2 domain is found at 284-387 (GEIRVGPSHQ…KALQRLVKKP (104 aa)). Positions 391–443 (LIEKCWTEDEVKRFVKGLRQYGKNFFRIRKELLPSKETGELITFYYYWKKTPE) constitute an SANT domain. A disordered region spans residues 464-495 (TRTASTPVNTPSRPPSSEFLDLSSASEDDFDS). Residues 465 to 474 (RTASTPVNTP) show a composition bias toward polar residues. Positions 479–488 (SSEFLDLSSA) are enriched in low complexity. The segment at 507 to 532 (CRHCFTTTSKDWHHGGRENILLCTDC) adopts a GATA-type zinc-finger fold. A disordered region spans residues 542 to 1125 (LPPIEKPVDP…PSHASQSARF (584 aa)). K560 participates in a covalent cross-link: Glycyl lysine isopeptide (Lys-Gly) (interchain with G-Cter in SUMO2). T593 is modified (phosphothreonine). S594, S600, and S613 each carry phosphoserine. Residues 609–623 (SGRNSPSAASTSSND) show a composition bias toward low complexity. Basic and acidic residues predominate over residues 624–640 (SKAETVKKSAKKVKEEA). Residue K637 forms a Glycyl lysine isopeptide (Lys-Gly) (interchain with G-Cter in SUMO2) linkage. 4 positions are modified to phosphoserine: S642, S656, S675, and S679. Over residues 652 to 673 (EKVASDTEDTDRITSKKTKTQE) the composition is skewed to basic and acidic residues. A compositionally biased stretch (basic and acidic residues) spans 688-708 (SDSRSVNDEGSSDPKDIDQDN). The span at 709–720 (RSTSPSIPSPQD) shows a compositional bias: polar residues. Low complexity predominate over residues 726 to 752 (DSSAQQQMLQAQPPALQAPSGAASAPS). Polar residues predominate over residues 778 to 792 (SPATSQPPNQTQSTV). A compositionally biased stretch (pro residues) spans 806–823 (LHPPRLPSPHPPLQPMTA). 3 stretches are compositionally biased toward low complexity: residues 824–857 (PPSQSSAQPHPQPSLHSQGPPGPHSLQTGPLLQH), 865–874 (GLPSQPSQGQ), and 891–901 (QLPASQSALQP). The span at 902–932 (QQPPREQPLPPAPLAMPHIKPPPTTPIPQLP) shows a compositional bias: pro residues. Positions 962–972 (KPLSSLSTHHP) are enriched in low complexity. A compositionally biased stretch (polar residues) spans 1012-1023 (HPTTGLHQVPSQ). Over residues 1027–1053 (PQHPFVPGGPPPITPPSCPPTSTPPAG) the composition is skewed to pro residues. Low complexity predominate over residues 1054–1077 (PSSSSQPPCSAAVSSGGSVPGAPS). Phosphoserine occurs at positions 1098, 1105, and 1107. Pro residues predominate over residues 1098 to 1109 (SPPPPPRSPSPE). A Phosphothreonine modification is found at T1111. Residues 1148 to 1203 (GSKLAKKREEAIEKAKREAEQKAREEREREKEKEKEREREREREREAERAAKASSS) are a coiled coil. K1150 carries the N6-acetyllysine modification. Basic and acidic residues predominate over residues 1154–1198 (KREEAIEKAKREAEQKAREEREREKEKEKEREREREREREAERAA). The interval 1154 to 1238 (KREEAIEKAK…TTIAAVPPYI (85 aa)) is disordered. Y1251 is modified (phosphotyrosine). S1258 bears the Phosphoserine mark.

As to quaternary structure, interacts with HDAC1 and ATN1. Interaction with ATN1 is improved when the poly-Gln region of ATN1 is extended. Interacts with FAT1.

Its subcellular location is the nucleus. The protein localises to the PML body. Its function is as follows. Plays a role as a transcriptional repressor during development. May play a role in the control of cell survival. The polypeptide is Arginine-glutamic acid dipeptide repeats protein (Rere) (Mus musculus (Mouse)).